The following is a 408-amino-acid chain: Phosphoglycerate kinase (408 aa).

Substrate contacts are provided by residues 22 to 24 (DIN), Arg-39, 60 to 63 (HQSR), Arg-117, and Arg-157. ATP-binding positions include Glu-332 and 358 to 361 (GGHT).

This sequence belongs to the phosphoglycerate kinase family. In terms of assembly, monomer.

The protein localises to the cytoplasm. It carries out the reaction (2R)-3-phosphoglycerate + ATP = (2R)-3-phospho-glyceroyl phosphate + ADP. It functions in the pathway carbohydrate degradation; glycolysis; pyruvate from D-glyceraldehyde 3-phosphate: step 2/5. The polypeptide is Phosphoglycerate kinase (pgk) (Thermoplasma acidophilum (strain ATCC 25905 / DSM 1728 / JCM 9062 / NBRC 15155 / AMRC-C165)).